Here is a 747-residue protein sequence, read N- to C-terminus: Polyribonucleotide nucleotidyltransferase (747 aa).

The Mg(2+) site is built by Asp-493 and Asp-499. One can recognise a KH domain in the interval 560 to 619; sequence PRIITLQINPEKIGALIGPGGKTVRGITEATGAQIDIEEDGRVYISTPDAAAAQQAVAMV. The S1 motif domain maps to 629-698; sequence GDIFLGKVVR…GTGKVSLSRR (70 aa). The tract at residues 705-747 is disordered; the sequence is TAEDRRAAGAGRGLRDGGGRSGGSDRGGDRGPRGDDRQRPRRR. Composition is skewed to basic and acidic residues over residues 706-722 and 730-747; these read AEDR…RDGG and RGGD…PRRR.

The protein belongs to the polyribonucleotide nucleotidyltransferase family. Mg(2+) is required as a cofactor.

Its subcellular location is the cytoplasm. It carries out the reaction RNA(n+1) + phosphate = RNA(n) + a ribonucleoside 5'-diphosphate. Functionally, involved in mRNA degradation. Catalyzes the phosphorolysis of single-stranded polyribonucleotides processively in the 3'- to 5'-direction. In Roseiflexus sp. (strain RS-1), this protein is Polyribonucleotide nucleotidyltransferase.